The primary structure comprises 520 residues: GMP synthase [glutamine-hydrolyzing] (520 aa).

Residues Thr-9–Gly-202 enclose the Glutamine amidotransferase type-1 domain. The active-site Nucleophile is Cys-86. Residues His-176 and Glu-178 contribute to the active site. Positions Trp-203–Arg-395 constitute a GMPS ATP-PPase domain. Ser-230–Ser-236 contributes to the ATP binding site.

As to quaternary structure, homodimer.

The enzyme catalyses XMP + L-glutamine + ATP + H2O = GMP + L-glutamate + AMP + diphosphate + 2 H(+). Its pathway is purine metabolism; GMP biosynthesis; GMP from XMP (L-Gln route): step 1/1. Its function is as follows. Catalyzes the synthesis of GMP from XMP. The polypeptide is GMP synthase [glutamine-hydrolyzing] (Brucella ovis (strain ATCC 25840 / 63/290 / NCTC 10512)).